We begin with the raw amino-acid sequence, 102 residues long: Small ribosomal subunit protein uS10 (102 aa).

It belongs to the universal ribosomal protein uS10 family. Part of the 30S ribosomal subunit.

Its function is as follows. Involved in the binding of tRNA to the ribosomes. The protein is Small ribosomal subunit protein uS10 of Pelagibacter ubique (strain HTCC1062).